The following is a 357-amino-acid chain: MTALLRNECKQALAKSLPWTKSPLVISAPMRVMTGPGLAVAVSSAGGLGFLGPTLKPEDVFADLDKAAELLGSSPIQGAAGPSLLPIGVGFQTWNGDLEVAVSAVTKHRPCAVWLFAPRRGQAELNEWTAAIRSASPDTRVWLQVGSLGEAVEAAASATPPDVLVLQGAEGGGHGRHRDAQGTIALVPEVSDALGHSGIPLVAAGGIVDGRGAAAALTLGAAGVAMGTRFLASSEARISKGYQDEVVRASDGAKNTVRTQLYNHLRGTFGWPEPFSPRTLINRSWRDHEAGVEFDRLKELHDESAKTGDAGWGPEGRLATYVGAAVGLVRRVDDAAVIVRETRDQARAILTSVVAHL.

FMN contacts are provided by glutamine 167, glycine 172, and glycine 206.

It belongs to the nitronate monooxygenase family. NMO class I subfamily. FMN is required as a cofactor.

In terms of biological role, nitronate monooxygenase; part of the gene cluster that mediates the biosynthesis of the deadly neurotoxic nitroalkane 3-nitropropanoic acid (3-NPA) that acts as an antimetabolite of succinate and irreversibly inhibits succinate dehydrogenase and disrupts mitochondrial oxidative phosphorylation. Catalyzes the oxidation of 3-NPA to nitrite and malonic semialdehyde. NpaC is not conserved in all fungal npa clusters and, while it is possible that it serves as a self-protection mechanism against accumulation of 3-NPA (by npaA and npaB) in the producing host, the more likely scenario may be the three enzymes representing an alternative catabolic pathway of aspartate to generate readily metabolizable nitrogen and carbon sources. This Metarhizium robertsii (strain ARSEF 23 / ATCC MYA-3075) (Metarhizium anisopliae (strain ARSEF 23)) protein is Nitronate monooxygenase npaC.